A 72-amino-acid polypeptide reads, in one-letter code: Translation initiation factor IF-1 (72 aa).

The S1-like domain occupies 1 to 72 (MSKEDVIEVE…SRGRIVYRFK (72 aa)).

This sequence belongs to the IF-1 family. Component of the 30S ribosomal translation pre-initiation complex which assembles on the 30S ribosome in the order IF-2 and IF-3, IF-1 and N-formylmethionyl-tRNA(fMet); mRNA recruitment can occur at any time during PIC assembly.

The protein resides in the cytoplasm. One of the essential components for the initiation of protein synthesis. Stabilizes the binding of IF-2 and IF-3 on the 30S subunit to which N-formylmethionyl-tRNA(fMet) subsequently binds. Helps modulate mRNA selection, yielding the 30S pre-initiation complex (PIC). Upon addition of the 50S ribosomal subunit IF-1, IF-2 and IF-3 are released leaving the mature 70S translation initiation complex. The protein is Translation initiation factor IF-1 of Desulfitobacterium hafniense (strain Y51).